Reading from the N-terminus, the 37-residue chain is Natriuretic peptide PNP (37 aa).

Cys14 and Cys30 form a disulfide bridge.

In terms of tissue distribution, expressed by the venom gland.

The protein localises to the secreted. Its function is as follows. Increases urine flow and decreases blood pressure when administered to rats by intravenous injection. Inhibits thrombin-induced platelet aggregation. Stimulates cGMP production via the natriuretic peptide receptor-A (NPR1). The polypeptide is Natriuretic peptide PNP (Pseudocerastes persicus (Persian horned viper)).